A 344-amino-acid chain; its full sequence is UDP-N-acetylglucosamine transporter UGNT1 (344 aa).

The segment at 1-23 (MRNNPVLPVSDPPLAGENDSDGK) is disordered. The next 9 helical transmembrane spans lie at 41 to 61 (YAAL…KAAL), 66 to 86 (FPCV…FLYA), 92 to 112 (IISF…FVPV), 114 to 134 (TLFH…ASMA), 167 to 187 (YTRS…FAGA), 194 to 214 (FYGY…LATI), 226 to 246 (FGLM…WTFI), 264 to 284 (FMVV…CIFL), and 304 to 324 (FTVG…MNVI).

The protein belongs to the TPT transporter family. UGnT (TC 2.A.7.15) subfamily. As to expression, expressed in roots, leaves, stems, flowers and siliques.

It is found in the golgi apparatus membrane. In terms of biological role, mediates the transport of UDP-N-acetylglucosamine (UDP-GlcNAc) across the Golgi apparatus membrane. Delivers an essential substrate for the maturation of N-glycans and the GlcNAc-containing glycosyl inositol phosphorylceramide (GIPC) class of sphingolipids in the Golgi apparatus. The chain is UDP-N-acetylglucosamine transporter UGNT1 from Arabidopsis thaliana (Mouse-ear cress).